A 149-amino-acid chain; its full sequence is MKCPFCSHSETQVVETRISEDGDSIRRRRQCASCQKRFTTYERPDVAFPAIVKKDGRRIEYERAKLLASMTLALRKRPVSTEQVDGAVERIEEKLLMQGVRELPSARLGELVMRELKKLDKVAYVRFASVYRSFEDIDEFKTLVDEVRR.

A zinc finger spans residues 3–34; sequence CPFCSHSETQVVETRISEDGDSIRRRRQCASC. The ATP-cone domain maps to 49-139; that stretch reads PAIVKKDGRR…VYRSFEDIDE (91 aa).

Belongs to the NrdR family. Requires Zn(2+) as cofactor.

Negatively regulates transcription of bacterial ribonucleotide reductase nrd genes and operons by binding to NrdR-boxes. The protein is Transcriptional repressor NrdR of Albidiferax ferrireducens (strain ATCC BAA-621 / DSM 15236 / T118) (Rhodoferax ferrireducens).